Reading from the N-terminus, the 185-residue chain is Elongation factor P (185 aa).

Belongs to the elongation factor P family.

The protein localises to the cytoplasm. It functions in the pathway protein biosynthesis; polypeptide chain elongation. Its function is as follows. Involved in peptide bond synthesis. Stimulates efficient translation and peptide-bond synthesis on native or reconstituted 70S ribosomes in vitro. Probably functions indirectly by altering the affinity of the ribosome for aminoacyl-tRNA, thus increasing their reactivity as acceptors for peptidyl transferase. The protein is Elongation factor P of Streptococcus pyogenes serotype M28 (strain MGAS6180).